Consider the following 130-residue polypeptide: Fluoride-specific ion channel FluC (130 aa).

The next 4 membrane-spanning stretches (helical) occupy residues 3–23 (LVFL…YFVG), 38–58 (LGTF…GHLA), 67–87 (FGIF…SYGL), and 102–122 (ISYV…GWFL). Residues Gly-77 and Thr-80 each coordinate Na(+).

Belongs to the fluoride channel Fluc/FEX (TC 1.A.43) family.

The protein resides in the cell inner membrane. It carries out the reaction fluoride(in) = fluoride(out). Na(+) is not transported, but it plays an essential structural role and its presence is essential for fluoride channel function. Fluoride-specific ion channel. Important for reducing fluoride concentration in the cell, thus reducing its toxicity. This is Fluoride-specific ion channel FluC from Helicobacter pylori (strain J99 / ATCC 700824) (Campylobacter pylori J99).